Here is a 387-residue protein sequence, read N- to C-terminus: Large ribosomal subunit protein uL3 (387 aa).

This sequence belongs to the universal ribosomal protein uL3 family.

It localises to the cytoplasm. The sequence is that of Large ribosomal subunit protein uL3 (RPL3) from Candida glabrata (strain ATCC 2001 / BCRC 20586 / JCM 3761 / NBRC 0622 / NRRL Y-65 / CBS 138) (Yeast).